The sequence spans 2082 residues: Polyketide synthase ThaQ (2082 aa).

Positions 398–468 are disordered; it reads NDARRAGSAR…DSAHDSAHAA (71 aa). 3 stretches are compositionally biased toward basic and acidic residues: residues 399-411, 419-430, and 439-468; these read DARR…RDAR, HGARHEAAHDAQ, and ADAH…AHAA. The Carrier 1 domain occupies 470-546; the sequence is ALRREGRAYL…ALLDHLLAAH (77 aa). The residue at position 507 (Ser507) is an O-(pantetheine 4'-phosphoryl)serine. 2 stretches are compositionally biased toward low complexity: residues 560-582 and 593-605; these read APAR…RAAP and DTPS…APAR. Positions 560–655 are disordered; it reads APARGVGARA…RYAPRAPHPD (96 aa). The segment covering 606–631 has biased composition (pro residues); that stretch reads PDQPAPSGPPAQPAQPAPRADTPPPA. The Ketosynthase family 3 (KS3) domain maps to 658-1077; it reads AEPVAIIGIS…GVNAHVVLEE (420 aa). 2 disordered regions span residues 1250 to 1269 and 1603 to 1653; these read APGT…EAAE and ARGP…VKSD. Composition is skewed to low complexity over residues 1256–1269 and 1612–1624; these read ASAG…EAAE and SPDA…RAQA. Basic and acidic residues predominate over residues 1640 to 1653; it reads ADSKAGPKSEVKSD. In terms of domain architecture, Carrier 2 spans 1669-1743; it reads ASVAASVEDA…ALVRAVAEAV (75 aa). Residue Ser1703 is modified to O-(pantetheine 4'-phosphoryl)serine. An AB hydrolase-1 domain is found at 1792 to 2022; it reads PRVVLIPGLG…GAGHAVFLTH (231 aa). A compositionally biased stretch (low complexity) spans 2045-2067; the sequence is GAAESVESVEATEAAEAARSPAV. A disordered region spans residues 2045–2082; sequence GAAESVESVEATEAAEAARSPAVARRRATDDAPVGSDA.

Pantetheine 4'-phosphate is required as a cofactor.

The protein resides in the cytoplasm. The protein operates within antibiotic biosynthesis. Its function is as follows. Involved in production of the polyketide antibiotic thailandamide. This is Polyketide synthase ThaQ from Burkholderia thailandensis (strain ATCC 700388 / DSM 13276 / CCUG 48851 / CIP 106301 / E264).